Consider the following 499-residue polypeptide: Potassium voltage-gated channel subfamily A member 2 (499 aa).

A disordered region spans residues 1-26 (MTVATGDPADEAAALPGHPQDTYDPE). The tract at residues 1–125 (MTVATGDPAD…YELGEEAMEM (125 aa)) is tetramerization domain. At 1–160 (MTVATGDPAD…LLFEYPESSG (160 aa)) the chain is on the cytoplasmic side. A helical membrane pass occupies residues 161-182 (PARIIAIVSVMVILISIVSFCL). Over 183-221 (ETLPIFRDENEDMHGSGVTFHTYSNSTIGYQQSTSFTDP) the chain is Extracellular. An N-linked (GlcNAc...) asparagine glycan is attached at asparagine 207. A helical transmembrane segment spans residues 222 to 243 (FFIVETLCIIWFSFEFLVRFFA). Residue cysteine 244 is the site of S-palmitoyl cysteine attachment. At 244-254 (CPSKAGFFTNI) the chain is on the cytoplasmic side. The chain crosses the membrane as a helical span at residues 255 to 275 (MNIIDIVAIIPYFITLGTELA). Over 276-289 (EKPEDAQQGQQAMS) the chain is Extracellular. Residues 290-310 (LAILRVIRLVRVFRIFKLSRH) traverse the membrane as a helical; Voltage-sensor segment. Residues 311–325 (SKGLQILGQTLKASM) lie on the Cytoplasmic side of the membrane. The S4-S5 linker stretch occupies residues 312–325 (KGLQILGQTLKASM). The chain crosses the membrane as a helical span at residues 326 to 347 (RELGLLIFFLFIGVILFSSAVY). Residues 348–361 (FAEADERESQFPSI) lie on the Extracellular side of the membrane. The segment at residues 362-373 (PDAFWWAVVSMT) is an intramembrane region (helical). A Selectivity filter motif is present at residues 374-379 (TVGYGD). Residues 374–381 (TVGYGDMV) lie within the membrane without spanning it. Topologically, residues 382–388 (PTTIGGK) are extracellular. Residues 389–417 (IVGSLCAIAGVLTIALPVPVIVSNFNYFY) traverse the membrane as a helical segment. Residues 418–499 (HRETEGEEQA…VNITKMLTDV (82 aa)) are Cytoplasmic-facing. Phosphotyrosine is present on tyrosine 429. Serine 434, serine 440, serine 441, and serine 449 each carry phosphoserine. The residue at position 458 (tyrosine 458) is a Phosphotyrosine. A Phosphoserine modification is found at serine 468. Positions 497 to 499 (TDV) match the PDZ-binding motif.

It belongs to the potassium channel family. A (Shaker) (TC 1.A.1.2) subfamily. Kv1.2/KCNA2 sub-subfamily. Homotetramer and heterotetramer with other channel-forming alpha subunits, such as KCNA1, KCNA4, KCNA5, KCNA6 and KCNA7. Channel activity is regulated by interaction with the beta subunits, including KCNAB1 and KCNAB2. Identified in a complex with KCNA1 and KCNAB2. Identified in a complex with KCNA5 and KCNAB1. Identified in a complex with KCNA4 and FYN. Interacts with the beta subunit KCNAB1. Interacts with PTK2B. Interacts (via C-terminus) with CTTN. Interacts (via N-terminal cytoplasmic domain) with RHOA (GTP-bound form); this regulates channel activity by reducing location at the cell surface in response to CHRM1 activation. Interacts with DRD2. Interacts with SIGMAR1; cocaine consumption leads to increased interaction. Interacts with ADAM22. Interacts (via C-terminus) with the PDZ domains of DLG1, DLG2 and DLG4. Interacts with CNTNAP2. Interacts with ADAM11. Interacts with LYNX1. In terms of processing, phosphorylated on tyrosine residues; phosphorylation increases in response to ischemia. Phosphorylated on tyrosine residues by activated PTK2B/PYK2. Phosphorylation on tyrosine residues suppresses ion channel activity. Phosphorylated on tyrosine residues in response to CHRM1 activation; this abolishes interaction with CTTN. This is probably due to endocytosis of the phosphorylated channel subunits. Phosphorylated on serine residues in response to increased cAMP levels; phosphorylation is apparently not catalyzed by PKA. Post-translationally, N-glycosylated, with complex, sialylated N-glycans. Detected in brain cortex. Detected in peroneal nerve in the juxtaparanodal regions of the node of Ranvier; expression is decreased in patients with diabetes mellitus that suffer from axonal neuropathy. Detected in paranodal and juxtanodal zones in myelinated spinal cord (at protein level).

It is found in the cell membrane. Its subcellular location is the membrane. It localises to the cell projection. The protein resides in the axon. The protein localises to the synapse. It is found in the endoplasmic reticulum membrane. Its subcellular location is the lamellipodium membrane. It localises to the synaptosome. The protein resides in the presynaptic cell membrane. The protein localises to the dendrite. It is found in the cell junction. Its subcellular location is the paranodal septate junction. It catalyses the reaction K(+)(in) = K(+)(out). With respect to regulation, inhibited by 4-aminopyridine (4-AP) and charybdotoxin (CTX), but not by tetraethylammonium (TEA). Inhibited by dendrotoxin (DTX). Inhibited by tityustoxin-K alpha (TsTX-Kalpha), a toxin that is highly specific for KCNA2. Inhibited by maurotoxin. Inhibited by kappaM conotoxins kappaM-RIIIJ and kappaM-RIIIK; kappaM-RIIIJ has much higher affinity for channels containing KCNA2 than kappaM-RIIIK, with the exception of heterodimers formed by KCNA2 and KCNA7 where the opposite is true. Voltage-gated potassium channel that mediates transmembrane potassium transport in excitable membranes, primarily in the brain and the central nervous system, but also in the cardiovascular system. Prevents aberrant action potential firing and regulates neuronal output. Forms tetrameric potassium-selective channels through which potassium ions pass in accordance with their electrochemical gradient. The channel alternates between opened and closed conformations in response to the voltage difference across the membrane. Can form functional homotetrameric channels and heterotetrameric channels that contain variable proportions of KCNA1, KCNA2, KCNA4, KCNA5, KCNA6, KCNA7, and possibly other family members as well; channel properties depend on the type of alpha subunits that are part of the channel. Channel properties are modulated by cytoplasmic beta subunits that regulate the subcellular location of the alpha subunits and promote rapid inactivation of delayed rectifier potassium channels. In vivo, membranes probably contain a mixture of heteromeric potassium channel complexes, making it difficult to assign currents observed in intact tissues to any particular potassium channel family member. Homotetrameric KCNA2 forms a delayed-rectifier potassium channel that opens in response to membrane depolarization, followed by slow spontaneous channel closure. In contrast, a heteromultimer formed by KCNA2 and KCNA4 shows rapid inactivation. Regulates neuronal excitability and plays a role as pacemaker in the regulation of neuronal action potentials. KCNA2-containing channels play a presynaptic role and prevent hyperexcitability and aberrant action potential firing. Response to toxins that are selective for KCNA2-containing potassium channels suggests that in Purkinje cells, dendritic subthreshold KCNA2-containing potassium channels prevent random spontaneous calcium spikes, suppressing dendritic hyperexcitability without hindering the generation of somatic action potentials, and thereby play an important role in motor coordination. Plays a role in the induction of long-term potentiation of neuron excitability in the CA3 layer of the hippocampus. May function as down-stream effector for G protein-coupled receptors and inhibit GABAergic inputs to basolateral amygdala neurons. May contribute to the regulation of neurotransmitter release, such as gamma-aminobutyric acid (GABA). Contributes to the regulation of the axonal release of the neurotransmitter dopamine. Reduced KCNA2 expression plays a role in the perception of neuropathic pain after peripheral nerve injury, but not acute pain. Plays a role in the regulation of the time spent in non-rapid eye movement (NREM) sleep. In Homo sapiens (Human), this protein is Potassium voltage-gated channel subfamily A member 2 (KCNA2).